We begin with the raw amino-acid sequence, 332 residues long: Probable endo-beta-1,4-glucanase B (332 aa).

Positions 1–18 (MKFQSTLLLAAAAGSALA) are cleaved as a signal peptide. N38 and N100 each carry an N-linked (GlcNAc...) asparagine glycan. E160 acts as the Proton donor in catalysis. N212 carries N-linked (GlcNAc...) asparagine glycosylation. The active-site Nucleophile is E267. N289 carries N-linked (GlcNAc...) asparagine glycosylation.

The protein belongs to the glycosyl hydrolase 5 (cellulase A) family.

The protein resides in the secreted. It carries out the reaction Endohydrolysis of (1-&gt;4)-beta-D-glucosidic linkages in cellulose, lichenin and cereal beta-D-glucans.. Its function is as follows. Has endoglucanase activity on substrates containing beta-1,4 glycosidic bonds, like in carboxymethylcellulose (CMC), hydroxyethylcellulose (HEC) and beta-glucan. Involved in the degradation of complex natural cellulosic substrates. The sequence is that of Probable endo-beta-1,4-glucanase B (eglB) from Aspergillus kawachii (strain NBRC 4308) (White koji mold).